Consider the following 228-residue polypeptide: Ras-related protein Rab-32D (228 aa).

16-23 (GDVNVGKT) serves as a coordination point for GTP. Residues 38–46 (YKSTIGADF) carry the Effector region motif. Residues 64–68 (DTAGQ) and 128–131 (NKSD) contribute to the GTP site. Positions 183–228 (SDNEQFNDSPDEETSSITLLGTSKKHDNTNPNKPSTSSPSSCFNCK) are disordered. Over residues 185 to 196 (NEQFNDSPDEET) the composition is skewed to acidic residues. The span at 211–228 (TNPNKPSTSSPSSCFNCK) shows a compositional bias: low complexity. Cys224 carries the S-geranylgeranyl cysteine lipid modification.

It belongs to the small GTPase superfamily. Rab family.

The chain is Ras-related protein Rab-32D (rab32D) from Dictyostelium discoideum (Social amoeba).